We begin with the raw amino-acid sequence, 448 residues long: Probable glycine dehydrogenase (decarboxylating) subunit 1 (448 aa).

Belongs to the GcvP family. N-terminal subunit subfamily. As to quaternary structure, the glycine cleavage system is composed of four proteins: P, T, L and H. In this organism, the P 'protein' is a heterodimer of two subunits.

It carries out the reaction N(6)-[(R)-lipoyl]-L-lysyl-[glycine-cleavage complex H protein] + glycine + H(+) = N(6)-[(R)-S(8)-aminomethyldihydrolipoyl]-L-lysyl-[glycine-cleavage complex H protein] + CO2. In terms of biological role, the glycine cleavage system catalyzes the degradation of glycine. The P protein binds the alpha-amino group of glycine through its pyridoxal phosphate cofactor; CO(2) is released and the remaining methylamine moiety is then transferred to the lipoamide cofactor of the H protein. This is Probable glycine dehydrogenase (decarboxylating) subunit 1 from Staphylococcus epidermidis (strain ATCC 35984 / DSM 28319 / BCRC 17069 / CCUG 31568 / BM 3577 / RP62A).